The sequence spans 233 residues: Large ribosomal subunit protein uL1 (233 aa).

Belongs to the universal ribosomal protein uL1 family. As to quaternary structure, part of the 50S ribosomal subunit.

In terms of biological role, binds directly to 23S rRNA. The L1 stalk is quite mobile in the ribosome, and is involved in E site tRNA release. Protein L1 is also a translational repressor protein, it controls the translation of the L11 operon by binding to its mRNA. In Rhodospirillum rubrum (strain ATCC 11170 / ATH 1.1.1 / DSM 467 / LMG 4362 / NCIMB 8255 / S1), this protein is Large ribosomal subunit protein uL1.